Consider the following 377-residue polypeptide: Chaperone protein DnaJ (377 aa).

Residues 5-70 (DYYEVLGVGK…EKKAAYDQYG (66 aa)) enclose the J domain. The CR-type zinc finger occupies 137–215 (GHEAQIRVPH…CHGQGKLKSQ (79 aa)). Residues cysteine 150, cysteine 153, cysteine 167, cysteine 170, cysteine 189, cysteine 192, cysteine 203, and cysteine 206 each contribute to the Zn(2+) site. CXXCXGXG motif repeat units follow at residues 150 to 157 (CDHCHGNG), 167 to 174 (CPTCHGAG), 189 to 196 (CPKCHGSG), and 203 to 210 (CTKCHGQG).

This sequence belongs to the DnaJ family. As to quaternary structure, homodimer. Zn(2+) serves as cofactor.

It localises to the cytoplasm. In terms of biological role, participates actively in the response to hyperosmotic and heat shock by preventing the aggregation of stress-denatured proteins and by disaggregating proteins, also in an autonomous, DnaK-independent fashion. Unfolded proteins bind initially to DnaJ; upon interaction with the DnaJ-bound protein, DnaK hydrolyzes its bound ATP, resulting in the formation of a stable complex. GrpE releases ADP from DnaK; ATP binding to DnaK triggers the release of the substrate protein, thus completing the reaction cycle. Several rounds of ATP-dependent interactions between DnaJ, DnaK and GrpE are required for fully efficient folding. Also involved, together with DnaK and GrpE, in the DNA replication of plasmids through activation of initiation proteins. The protein is Chaperone protein DnaJ of Cupriavidus taiwanensis (strain DSM 17343 / BCRC 17206 / CCUG 44338 / CIP 107171 / LMG 19424 / R1) (Ralstonia taiwanensis (strain LMG 19424)).